Here is a 483-residue protein sequence, read N- to C-terminus: Zinc metalloproteinase/disintegrin (483 aa).

The first 20 residues, Met1 to Ser20, serve as a signal peptide directing secretion. Residues Ile21–Glu190 constitute a propeptide that is removed on maturation. The Peptidase M12B domain occupies Arg197–Pro395. Glu200 provides a ligand contact to Ca(2+). Asn263 carries N-linked (GlcNAc...) asparagine glycosylation. Asp284 provides a ligand contact to Ca(2+). N-linked (GlcNAc...) asparagine glycosylation occurs at Asn293. 3 disulfide bridges follow: Cys308-Cys390, Cys352-Cys374, and Cys354-Cys357. His333 lines the Zn(2+) pocket. Glu334 is an active-site residue. Zn(2+)-binding residues include His337 and His343. Ca(2+)-binding residues include Cys390 and Asn393. A propeptide spanning residues Leu396 to Ala413 is cleaved from the precursor. Residues Thr403 to Leu483 form the Disintegrin domain. 6 disulfide bridges follow: Cys417/Cys432, Cys419/Cys427, Cys426/Cys449, Cys440/Cys446, Cys445/Cys470, and Cys458/Cys477. Positions Arg462–Asp464 match the Cell attachment site motif.

This sequence belongs to the venom metalloproteinase (M12B) family. P-II subfamily. P-IIa sub-subfamily. In terms of assembly, monomeric (disintegrin). Requires Zn(2+) as cofactor. As to expression, expressed by the venom gland.

The protein resides in the secreted. Its function is as follows. Impairs hemostasis in the envenomed animal. Inhibits platelet aggregation induced by ADP, thrombin, platelet-activating factor and collagen. Acts by inhibiting fibrinogen interaction with platelet receptors GPIIb/GPIIIa (ITGA2B/ITGB3). The protein is Zinc metalloproteinase/disintegrin of Protobothrops flavoviridis (Habu).